A 144-amino-acid polypeptide reads, in one-letter code: Snaclec trimecetin subunit beta (144 aa).

The N-terminal stretch at 1–23 (MGRFIFVSFGLLVVFLSLSGTAA) is a signal peptide. 3 disulfides stabilise this stretch: cysteine 25-cysteine 36, cysteine 53-cysteine 142, and cysteine 119-cysteine 134. One can recognise a C-type lectin domain in the interval 32–143 (FRRYCYQVFQ…CSSKRYVVCK (112 aa)).

The protein belongs to the snaclec family. As to quaternary structure, heterodimer of subunits alpha and beta; disulfide-linked. In terms of tissue distribution, expressed by the venom gland.

The protein localises to the secreted. In terms of biological role, snaclec that induces platelet aggregation in either human platelet rich plasma (PRP) or washed platelet suspensions. It causes aggregation in a dose-dependent manner even in the absence of various platelet agonists such as ADP or von Willebrand factor (vWF). Interestingly, it does not induce aggregation in rabbit PRP. A monoclonal antibody against the platelet GPIb receptor blocks the aggregation induced by trimecetin, suggesting that it acts by binding to GPIb (GP1BA/GP1BB). The chain is Snaclec trimecetin subunit beta from Protobothrops mucrosquamatus (Taiwan habu).